Here is a 97-residue protein sequence, read N- to C-terminus: Integration host factor subunit alpha (97 aa).

Residues 50–71 are disordered; sequence FGNFTLRDKPQRPGRNPKTGEE.

This sequence belongs to the bacterial histone-like protein family. Heterodimer of an alpha and a beta chain.

This protein is one of the two subunits of integration host factor, a specific DNA-binding protein that functions in genetic recombination as well as in transcriptional and translational control. The protein is Integration host factor subunit alpha of Legionella pneumophila (strain Paris).